The chain runs to 97 residues: Large ribosomal subunit protein uL23 (97 aa).

This sequence belongs to the universal ribosomal protein uL23 family. Part of the 50S ribosomal subunit. Contacts protein L29, and trigger factor when it is bound to the ribosome.

Its function is as follows. One of the early assembly proteins it binds 23S rRNA. One of the proteins that surrounds the polypeptide exit tunnel on the outside of the ribosome. Forms the main docking site for trigger factor binding to the ribosome. The sequence is that of Large ribosomal subunit protein uL23 from Pelagibacter ubique (strain HTCC1062).